We begin with the raw amino-acid sequence, 227 residues long: N-(5'-phosphoribosyl)anthranilate isomerase (227 aa).

The protein belongs to the TrpF family.

It carries out the reaction N-(5-phospho-beta-D-ribosyl)anthranilate = 1-(2-carboxyphenylamino)-1-deoxy-D-ribulose 5-phosphate. It participates in amino-acid biosynthesis; L-tryptophan biosynthesis; L-tryptophan from chorismate: step 3/5. This chain is N-(5'-phosphoribosyl)anthranilate isomerase, found in Herminiimonas arsenicoxydans.